The chain runs to 283 residues: Methylamine utilization protein MauF (283 aa).

Transmembrane regions (helical) follow at residues 37–57 (FALM…LHSA), 58–78 (MSAT…GGFL), 116–136 (GYAI…WLLF), 143–163 (YMVA…FGFM), 187–207 (IGLL…QTPI), 210–230 (IVTG…IIGI), and 263–283 (VEVD…LLVL).

It localises to the cell membrane. It functions in the pathway one-carbon metabolism; methylamine degradation. This is Methylamine utilization protein MauF (mauF) from Methylobacillus flagellatus (strain ATCC 51484 / DSM 6875 / VKM B-1610 / KT).